The primary structure comprises 64 residues: Metallothionein-like protein 1 (64 aa).

It belongs to the metallothionein superfamily. Type 15 family.

Its function is as follows. Metallothioneins have a high content of cysteine residues that bind various heavy metals. The sequence is that of Metallothionein-like protein 1 (MT1) from Prunus avium (Cherry).